The following is a 292-amino-acid chain: Formamidopyrimidine-DNA glycosylase (292 aa).

Pro-2 acts as the Schiff-base intermediate with DNA in catalysis. Glu-3 acts as the Proton donor in catalysis. Lys-60 functions as the Proton donor; for beta-elimination activity in the catalytic mechanism. Residues His-109, Arg-128, and Arg-173 each coordinate DNA. Residues 258–292 form an FPG-type zinc finger; that stretch reads NVYRRTGRECRKCGNLIERQKITGRSTHWCPNCQK. Arg-282 (proton donor; for delta-elimination activity) is an active-site residue.

The protein belongs to the FPG family. As to quaternary structure, monomer. Zn(2+) is required as a cofactor.

The catalysed reaction is Hydrolysis of DNA containing ring-opened 7-methylguanine residues, releasing 2,6-diamino-4-hydroxy-5-(N-methyl)formamidopyrimidine.. The enzyme catalyses 2'-deoxyribonucleotide-(2'-deoxyribose 5'-phosphate)-2'-deoxyribonucleotide-DNA = a 3'-end 2'-deoxyribonucleotide-(2,3-dehydro-2,3-deoxyribose 5'-phosphate)-DNA + a 5'-end 5'-phospho-2'-deoxyribonucleoside-DNA + H(+). Involved in base excision repair of DNA damaged by oxidation or by mutagenic agents. Acts as a DNA glycosylase that recognizes and removes damaged bases. Has a preference for oxidized purines, such as 7,8-dihydro-8-oxoguanine (8-oxoG). Has AP (apurinic/apyrimidinic) lyase activity and introduces nicks in the DNA strand. Cleaves the DNA backbone by beta-delta elimination to generate a single-strand break at the site of the removed base with both 3'- and 5'-phosphates. The chain is Formamidopyrimidine-DNA glycosylase from Prochlorococcus marinus (strain MIT 9301).